A 650-amino-acid polypeptide reads, in one-letter code: Acetyl-coenzyme A synthetase (650 aa).

CoA contacts are provided by residues 191-194, Thr311, and Asn335; that span reads RGGR. ATP contacts are provided by residues 387-389, 411-416, Asp500, and Arg515; these read GEP and DTWWQT. CoA is bound at residue Ser523. Residue Arg526 coordinates ATP. Val537, His539, and Val542 together coordinate Mg(2+). A CoA-binding site is contributed by Arg584. N6-acetyllysine is present on Lys609.

This sequence belongs to the ATP-dependent AMP-binding enzyme family. Mg(2+) serves as cofactor. Post-translationally, acetylated. Deacetylation by the SIR2-homolog deacetylase activates the enzyme.

The catalysed reaction is acetate + ATP + CoA = acetyl-CoA + AMP + diphosphate. Functionally, catalyzes the conversion of acetate into acetyl-CoA (AcCoA), an essential intermediate at the junction of anabolic and catabolic pathways. AcsA undergoes a two-step reaction. In the first half reaction, AcsA combines acetate with ATP to form acetyl-adenylate (AcAMP) intermediate. In the second half reaction, it can then transfer the acetyl group from AcAMP to the sulfhydryl group of CoA, forming the product AcCoA. The chain is Acetyl-coenzyme A synthetase from Shewanella baltica (strain OS155 / ATCC BAA-1091).